Consider the following 704-residue polypeptide: Polyribonucleotide nucleotidyltransferase (704 aa).

Residues Asp-491 and Asp-497 each coordinate Mg(2+). In terms of domain architecture, KH spans 558–617; sequence PNYAVIEINSDKIRDVIGKGGATIRQLTEDTGAVIDIDDNGTIRIFGENKAATKEAIRQI. The region spanning 627-695 is the S1 motif domain; that stretch reads GKVYKGTVAR…NRGRIKLTMK (69 aa).

Belongs to the polyribonucleotide nucleotidyltransferase family. Component of the RNA degradosome, which is a multiprotein complex involved in RNA processing and mRNA degradation. The cofactor is Mg(2+).

It is found in the cytoplasm. It catalyses the reaction RNA(n+1) + phosphate = RNA(n) + a ribonucleoside 5'-diphosphate. Its function is as follows. Involved in mRNA degradation. Catalyzes the phosphorolysis of single-stranded polyribonucleotides processively in the 3'- to 5'-direction. This Psychrobacter sp. (strain PRwf-1) protein is Polyribonucleotide nucleotidyltransferase.